Here is a 551-residue protein sequence, read N- to C-terminus: Rhodopsin kinase grk7-a (551 aa).

Ser36 is subject to Phosphoserine. The RGS domain occupies 57–174 (YQSICVEQPI…QNSPFYDRFL (118 aa)). The 263-residue stretch at 189–451 (FYEFRILGKG…DDDPRKHAFF (263 aa)) folds into the Protein kinase domain. ATP contacts are provided by residues 195-203 (LGKGGFGEV) and Lys218. The active-site Proton acceptor is the Asp314. The 66-residue stretch at 452–517 (KSINFQRLEA…GAIPISWQKE (66 aa)) folds into the AGC-kinase C-terminal domain. Residue Ser487 is modified to Phosphoserine. A disordered region spans residues 529 to 551 (DPSREATGGGGNSGEKSGVCSIL). The segment covering 542–551 (GEKSGVCSIL) has biased composition (low complexity). Position 548 is a cysteine methyl ester (Cys548). Cys548 is lipidated: S-geranylgeranyl cysteine. The propeptide at 549-551 (SIL) is removed in mature form.

The protein belongs to the protein kinase superfamily. AGC Ser/Thr protein kinase family. GPRK subfamily. In terms of processing, autophosphorylated in vitro at Ser-487. Phosphorylation at Ser-36 is regulated by light and activated by cAMP.

Its subcellular location is the membrane. It carries out the reaction L-threonyl-[rhodopsin] + ATP = O-phospho-L-threonyl-[rhodopsin] + ADP + H(+). The enzyme catalyses L-seryl-[rhodopsin] + ATP = O-phospho-L-seryl-[rhodopsin] + ADP + H(+). In terms of biological role, retina-specific kinase involved in the shutoff of the photoresponse and adaptation to changing light conditions via cone opsin phosphorylation, including rhodopsin (RHO). The protein is Rhodopsin kinase grk7-a (grk7-a) of Xenopus laevis (African clawed frog).